A 348-amino-acid polypeptide reads, in one-letter code: MAEQQKGLTYADAGVDIDAGNALVERIKPAAKRTARPGTVSGLGGFGALFDLKAAGYHDPVLVAATDGVGTKLRIAIDTGEVDTIGIDLVAMCVNDLVCQGAEPLFFLDYFATGKLEVAQAARIIEGIAEGCAASGCALIGGETAEMPGMYHKGDFDLAGFAVGAMERGADLPQGVAEGDVLLGLGSNGVHSNGYSFVRKVVELSGLGWDAPAPFGGDSLGRALLAPTRLYVKQALAAVRAGGVHALAHITGGGLTENLPRVLPEGLGARIDLSAWELPSVFRWLAETASMAEPELLKTFNCGIGMIVVVAADRADEIAALLAAEGETVTRIGEVIAGEGVSYDGRLL.

The protein belongs to the AIR synthase family.

The protein localises to the cytoplasm. It carries out the reaction 2-formamido-N(1)-(5-O-phospho-beta-D-ribosyl)acetamidine + ATP = 5-amino-1-(5-phospho-beta-D-ribosyl)imidazole + ADP + phosphate + H(+). It functions in the pathway purine metabolism; IMP biosynthesis via de novo pathway; 5-amino-1-(5-phospho-D-ribosyl)imidazole from N(2)-formyl-N(1)-(5-phospho-D-ribosyl)glycinamide: step 2/2. The chain is Phosphoribosylformylglycinamidine cyclo-ligase from Cereibacter sphaeroides (strain KD131 / KCTC 12085) (Rhodobacter sphaeroides).